The chain runs to 91 residues: UPF0298 protein M28_Spy0318 (91 aa).

The protein belongs to the UPF0298 family.

The protein localises to the cytoplasm. This is UPF0298 protein M28_Spy0318 from Streptococcus pyogenes serotype M28 (strain MGAS6180).